Here is a 379-residue protein sequence, read N- to C-terminus: 1-deoxy-D-xylulose 5-phosphate reductoisomerase (379 aa).

Positions 10, 11, 12, 13, and 121 each coordinate NADPH. Lys-122 contacts 1-deoxy-D-xylulose 5-phosphate. Glu-123 contributes to the NADPH binding site. Asp-147 contacts Mn(2+). Ser-148, Glu-149, Ser-173, and His-196 together coordinate 1-deoxy-D-xylulose 5-phosphate. Position 149 (Glu-149) interacts with Mn(2+). Gly-202 provides a ligand contact to NADPH. The 1-deoxy-D-xylulose 5-phosphate site is built by Ser-209, Asn-214, Lys-215, and Glu-218. Glu-218 is a binding site for Mn(2+).

The protein belongs to the DXR family. It depends on Mg(2+) as a cofactor. Mn(2+) is required as a cofactor.

The enzyme catalyses 2-C-methyl-D-erythritol 4-phosphate + NADP(+) = 1-deoxy-D-xylulose 5-phosphate + NADPH + H(+). Its pathway is isoprenoid biosynthesis; isopentenyl diphosphate biosynthesis via DXP pathway; isopentenyl diphosphate from 1-deoxy-D-xylulose 5-phosphate: step 1/6. Catalyzes the NADPH-dependent rearrangement and reduction of 1-deoxy-D-xylulose-5-phosphate (DXP) to 2-C-methyl-D-erythritol 4-phosphate (MEP). The sequence is that of 1-deoxy-D-xylulose 5-phosphate reductoisomerase from Chlamydia abortus (strain DSM 27085 / S26/3) (Chlamydophila abortus).